A 557-amino-acid chain; its full sequence is MTAQGFLLIATFLLVLMVLARPLGSGLARLINDIPLPGTAGVERVLFRLPGVSDSEMNWKQYLCAILGLNMLGLAVLFFMLLGQHYLPLNPQQLPGLSWDLALNTAVSFVTNTNWQSYSGETTLSYFSQMAGLTVQNFLSAASGIAVIFALIRAFTRQSMSTLGNAWVDLLRITLWVLVPVALLIALFFIQQGALQNFLPYQAVNTVEGAQQLLPMGPVASQEAIKMLGTNGGGFFNANSSHPFENPTALTNFVQMLAIFLIPTALCFAFGEVAGDRRQGRMLLWAMSVIFVICVGVVMWAEVQGNPHLLALGADSSINMEGKESRFGVLVSSLFAVVTTAASCGAVIAMHDSFTALGGMVPMWLMQIGEVVFGGVGSGLYGMMLFVLLAVFIAGLMIGRTPEYLGKKIDVREMKLTALAILVTPTLVLMGAALAMMTDAGRSAMLNPGPHGFSEVLYAVSSAANNNGSAFAGLSANSPFWNCLLAFCMFVGRFGVIIPVMAIAGSLVSKKSQPASSGTLPTHGPLFVGLLIGTVLLVGALTFIPALALGPVAEYLS.

12 helical membrane passes run 5–25, 63–83, 132–152, 170–190, 253–273, 283–303, 329–349, 356–376, 379–399, 416–436, 484–504, and 526–546; these read GFLLIATFLLVLMVLARPLGS, LCAILGLNMLGLAVLFFMLLG, GLTVQNFLSAASGIAVIFALI, LLRITLWVLVPVALLIALFFI, FVQMLAIFLIPTALCFAFGEV, LLWAMSVIFVICVGVVMWAEV, VLVSSLFAVVTTAASCGAVIA, ALGGMVPMWLMQIGEVVFGGV, GLYGMMLFVLLAVFIAGLMIG, LTALAILVTPTLVLMGAALAM, LLAFCMFVGRFGVIIPVMAIA, and LFVGLLIGTVLLVGALTFIPA.

The protein belongs to the KdpA family. In terms of assembly, the system is composed of three essential subunits: KdpA, KdpB and KdpC.

The protein resides in the cell inner membrane. Functionally, part of the high-affinity ATP-driven potassium transport (or Kdp) system, which catalyzes the hydrolysis of ATP coupled with the electrogenic transport of potassium into the cytoplasm. This subunit binds the periplasmic potassium ions and delivers the ions to the membrane domain of KdpB through an intramembrane tunnel. This Escherichia coli O17:K52:H18 (strain UMN026 / ExPEC) protein is Potassium-transporting ATPase potassium-binding subunit.